The following is a 449-amino-acid chain: Glucose-6-phosphate isomerase (449 aa).

The active-site Proton donor is the glutamate 291. Catalysis depends on residues histidine 312 and lysine 426.

It belongs to the GPI family.

It localises to the cytoplasm. The catalysed reaction is alpha-D-glucose 6-phosphate = beta-D-fructose 6-phosphate. Its pathway is carbohydrate biosynthesis; gluconeogenesis. The protein operates within carbohydrate degradation; glycolysis; D-glyceraldehyde 3-phosphate and glycerone phosphate from D-glucose: step 2/4. Catalyzes the reversible isomerization of glucose-6-phosphate to fructose-6-phosphate. The chain is Glucose-6-phosphate isomerase from Streptococcus pyogenes serotype M6 (strain ATCC BAA-946 / MGAS10394).